A 421-amino-acid polypeptide reads, in one-letter code: Cyclin-A1 (421 aa).

Residues 1 to 21 (MHRQSSKSGVALPPVGQGPDA) form a disordered region.

The protein belongs to the cyclin family. Cyclin AB subfamily. In terms of assembly, interacts with INCA1 and KLHDC9. Interacts with the CDK2 and CDC2 protein kinases to form a serine/threonine kinase holoenzyme complex. The cyclin subunit imparts substrate specificity to the complex. Found in a complex with CDK2, CABLES1 and CCNE1. Post-translationally, polyubiquitinated via 'Lys-11'-linked ubiquitin by the anaphase-promoting complex (APC/C), leading to its degradation by the proteasome. Deubiquitinated and stabilized by USP37 enables entry into S phase. Ubiquitinated during the G1 phase by the SCF(FBXO31) complex, leading to its proteasomal degradation. In terms of tissue distribution, testis and ovaries.

Its subcellular location is the nucleus. It localises to the cytoplasm. It is found in the cytoskeleton. The protein resides in the spindle. Its function is as follows. May be involved in the control of the cell cycle at the G1/S (start) and G2/M (mitosis) transitions. May primarily function in the control of the germline meiotic cell cycle and additionally in the control of mitotic cell cycle in some somatic cells. This is Cyclin-A1 (Ccna1) from Mus musculus (Mouse).